A 215-amino-acid polypeptide reads, in one-letter code: Cytochrome b6 (215 aa).

The chain crosses the membrane as a helical span at residues I32–F52. C35 provides a ligand contact to heme c. Residues H86 and H100 each coordinate heme b. 3 helical membrane passes run A90–F110, L116–Y136, and L186–I206. 2 residues coordinate heme b: H187 and H202.

This sequence belongs to the cytochrome b family. PetB subfamily. The 4 large subunits of the cytochrome b6-f complex are cytochrome b6, subunit IV (17 kDa polypeptide, PetD), cytochrome f and the Rieske protein, while the 4 small subunits are PetG, PetL, PetM and PetN. The complex functions as a dimer. Requires heme b as cofactor. The cofactor is heme c.

The protein localises to the plastid. It localises to the chloroplast thylakoid membrane. Functionally, component of the cytochrome b6-f complex, which mediates electron transfer between photosystem II (PSII) and photosystem I (PSI), cyclic electron flow around PSI, and state transitions. The protein is Cytochrome b6 of Cucumis sativus (Cucumber).